Here is a 580-residue protein sequence, read N- to C-terminus: E3 ubiquitin-protein ligase TRIM45 (580 aa).

Residues 29–98 form an RING-type zinc finger; it reads CPLCMGLFKA…QIGILCPVCD (70 aa). 2 B box-type zinc fingers span residues 130-176 and 186-227; these read GQGL…MVDL and GKPI…CDFT. Zn(2+) is bound by residues C135, C138, C158, H162, C191, H194, C214, and H219. Residues 281–335 are a coiled coil; the sequence is SEGYIKAIEEHRDKLLKQLEDIRVQKENSLQLQKAQLEQLLADMRTGVEFTEHLL. A Filamin repeat occupies 394 to 497; that stretch reads TKEVDPAKCV…VQGSPFTVTV (104 aa).

This sequence belongs to the TRIM/RBCC family.

It is found in the cytoplasm. It localises to the nucleus. The catalysed reaction is S-ubiquitinyl-[E2 ubiquitin-conjugating enzyme]-L-cysteine + [acceptor protein]-L-lysine = [E2 ubiquitin-conjugating enzyme]-L-cysteine + N(6)-ubiquitinyl-[acceptor protein]-L-lysine.. In terms of biological role, E3 ubiquitin-protein ligase that plays a role in the regulation of inflammatory response. Mechanistically, mediates the 'Lys-48'-linked polyubiquitination of TAB2, a regulatory protein of the kinase TAK1, leading to its degradation via the proteasomal pathway and inhibition of the TLR-mediated inflammatory immune response. May act as a transcriptional repressor in mitogen-activated protein kinase signaling pathway. This chain is E3 ubiquitin-protein ligase TRIM45 (TRIM45), found in Bos taurus (Bovine).